A 444-amino-acid polypeptide reads, in one-letter code: Nuclear envelope integral membrane protein 1 (444 aa).

Positions 1 to 43 are cleaved as a signal peptide; the sequence is MAGGMKVAVSPAVGPGPWGSGVGGGGTVRLLLILSGCLVYGTA. The N-linked (GlcNAc...) asparagine glycan is linked to Asn-125. The next 5 membrane-spanning stretches (helical) occupy residues 161 to 181, 186 to 206, 216 to 236, 245 to 265, and 289 to 309; these read PKLF…DLLS, FYYS…IIFI, PIYV…QLVF, CYWQ…FAVC, and LCFM…IIIA. Positions 186–297 are a; required for its colocalization with lamins at the nuclear envelope; sequence FYYSTGMTVG…GLCFMYSGIQ (112 aa). Residues 336–405 are b; required for interaction with RAN-GTP; the sequence is PVPPRLLTEE…LTPNEVSVHE (70 aa). Positions 336–444 are required for nuclear localization; sequence PVPPRLLTEE…PAITQNNFLT (109 aa). 3 positions are modified to phosphoserine: Ser-368, Ser-424, and Ser-425.

It belongs to the NEMP family. As to quaternary structure, homooligomer. Interacts with RAN-GTP. Interacts with EMD. Post-translationally, phosphorylation may regulate its interaction with RAN-GTP.

The protein resides in the nucleus inner membrane. It is found in the nucleus envelope. Its function is as follows. Together with EMD, contributes to nuclear envelope stiffness in germ cells. Required for female fertility. Essential for normal erythropoiesis. Required for efficient nuclear envelope opening and enucleation during the late stages of erythroblast maturation. In Homo sapiens (Human), this protein is Nuclear envelope integral membrane protein 1 (NEMP1).